The primary structure comprises 373 residues: Flagellar P-ring protein (373 aa).

Positions 1-26 are cleaved as a signal peptide; sequence MKLFFRIVTLVAVVAMSLADMAPAWA.

The protein belongs to the FlgI family. The basal body constitutes a major portion of the flagellar organelle and consists of four rings (L,P,S, and M) mounted on a central rod.

Its subcellular location is the periplasm. It is found in the bacterial flagellum basal body. Assembles around the rod to form the L-ring and probably protects the motor/basal body from shearing forces during rotation. The chain is Flagellar P-ring protein from Rhizobium etli (strain ATCC 51251 / DSM 11541 / JCM 21823 / NBRC 15573 / CFN 42).